The primary structure comprises 110 residues: UPF0122 protein Sca_0859 (110 aa).

Belongs to the UPF0122 family.

In terms of biological role, might take part in the signal recognition particle (SRP) pathway. This is inferred from the conservation of its genetic proximity to ftsY/ffh. May be a regulatory protein. This Staphylococcus carnosus (strain TM300) protein is UPF0122 protein Sca_0859.